Here is a 109-residue protein sequence, read N- to C-terminus: MFGKGGLGNLMKQAQQMQERMQKMQEEIAQLEVTGESGAGLVKVTINGAHNCRRVEIDPSLMEDDKDMLEDLIAAAFNDAARRADELQKEKMASVTAGMPIPPGFKMPF.

The disordered stretch occupies residues 1 to 21 (MFGKGGLGNLMKQAQQMQERM).

The protein belongs to the YbaB/EbfC family. In terms of assembly, homodimer.

Its subcellular location is the cytoplasm. The protein resides in the nucleoid. In terms of biological role, binds to DNA and alters its conformation. May be involved in regulation of gene expression, nucleoid organization and DNA protection. This Mannheimia succiniciproducens (strain KCTC 0769BP / MBEL55E) protein is Nucleoid-associated protein MS1507.